We begin with the raw amino-acid sequence, 1092 residues long: Rho GTPase-activating protein 7 (1092 aa).

In terms of domain architecture, SAM spans 11-78 (LTQIEAKEAC…LNKCAVMKLE (68 aa)). Phosphoserine occurs at positions 86, 89, and 129. Disordered stretches follow at residues 121–179 (PKQD…DATT), 297–330 (RSVSNSTQTSSSSSQSETSSAVSTPSPVTRTRSL), 409–434 (GPGHLSLRRENSHDSPKELKRRNSSS), and 492–553 (SDEG…SGVG). Over residues 130–143 (PDNSRLQSATSHES) the composition is skewed to polar residues. Composition is skewed to low complexity over residues 154–174 (VASVRSLSSTSSSVPTHAAHS) and 299–325 (VSNSTQTSSSSSQSETSSAVSTPSPVT). Positions 275 to 448 (QLNCVEISAL…RLSIYDNVPG (174 aa)) are focal adhesion-targeting (FAT). Position 322 is a phosphoserine (serine 322). A compositionally biased stretch (basic and acidic residues) spans 415–426 (LRRENSHDSPKE). Positions 500–512 (ALDSVSPCPSSPK) are enriched in polar residues. Residues 514-526 (IHLDVDHDRRTPS) are compositionally biased toward basic and acidic residues. The span at 527-536 (DLDSTGNSLN) shows a compositional bias: polar residues. Residues 615–637 (KHGFSWAVPKFMKRIKVPDYKDR) are polybasic cluster (PBR). Residues 642–848 (VPLTVNVQRS…HMIAECKKLF (207 aa)) enclose the Rho-GAP domain. Positions 878–1085 (NSDQPADYRH…RDSFSNQNTE (208 aa)) constitute an START domain.

Interacts with EF1A1, facilitates EF1A1 distribution to the membrane periphery and ruffles upon growth factor stimulation and suppresses cell migration. Interacts with tensin TNS1 (via N-terminus); the interaction is decreased by phosphorylation of TNS1. Interacts with TNS3 and PTEN; in resting cells, interacts with TNS3 (via C2 tensin-type domain) but, following growth factor stimulation, TNS3 and PTEN are phosphorylated which leads to weakened interaction with TNS3 and enhanced interaction with PTEN. Interacts (via C-terminus) with tensin TNS4 (via SH2 domain); the interaction is independent of tyrosine phosphorylation of DLC1. In terms of tissue distribution, widely expressed with the highest levels in heart, liver and lung.

It is found in the cytoplasm. The protein localises to the cell junction. The protein resides in the focal adhesion. Its subcellular location is the membrane. Functions as a GTPase-activating protein for the small GTPases RHOA, RHOB, RHOC and CDC42, terminating their downstream signaling. This induces morphological changes and detachment through cytoskeletal reorganization, playing a critical role in biological processes such as cell migration and proliferation. Also functions in vivo as an activator of the phospholipase PLCD1. Active DLC1 increases cell migration velocity but reduces directionality. Required for growth factor-induced epithelial cell migration; in resting cells, interacts with TNS3 while PTEN interacts with the p85 regulatory subunit of the PI3K kinase complex but growth factor stimulation induces phosphorylation of TNS3 and PTEN, causing them to change their binding preference so that PTEN interacts with DLC1 and TNS3 interacts with p85. The PTEN-DLC1 complex translocates to the posterior of migrating cells to activate RHOA while the TNS3-p85 complex translocates to the leading edge of migrating cells to promote RAC1 activation. The polypeptide is Rho GTPase-activating protein 7 (Dlc1) (Mus musculus (Mouse)).